The sequence spans 40 residues: Antimicrobial peptide 2 (40 aa).

One can recognise a Chitin-binding type-1 domain in the interval 1–40 (AQCGAQGGGATCPGGLCCSQWGWCGSTPKYCGAGCQSNCR). Cystine bridges form between Cys3-Cys18, Cys12-Cys24, Cys17-Cys31, and Cys35-Cys39.

Post-translationally, not glycosylated.

Functionally, antimicrobial peptide active against plant pathogenic fungi and Gram-negative and -positive bacteria. The chain is Antimicrobial peptide 2 from Fagopyrum esculentum (Common buckwheat).